Consider the following 217-residue polypeptide: 3,4-dihydroxy-2-butanone 4-phosphate synthase (217 aa).

Residues 37 to 38 (RE), D42, 150 to 154 (RGGHT), and E174 each bind D-ribulose 5-phosphate. E38 contributes to the Mg(2+) binding site. H153 is a Mg(2+) binding site.

The protein belongs to the DHBP synthase family. As to quaternary structure, homodimer. The cofactor is Mg(2+). Requires Mn(2+) as cofactor.

It carries out the reaction D-ribulose 5-phosphate = (2S)-2-hydroxy-3-oxobutyl phosphate + formate + H(+). Its pathway is cofactor biosynthesis; riboflavin biosynthesis; 2-hydroxy-3-oxobutyl phosphate from D-ribulose 5-phosphate: step 1/1. Its function is as follows. Catalyzes the conversion of D-ribulose 5-phosphate to formate and 3,4-dihydroxy-2-butanone 4-phosphate. This chain is 3,4-dihydroxy-2-butanone 4-phosphate synthase, found in Salmonella paratyphi A (strain ATCC 9150 / SARB42).